The primary structure comprises 161 residues: Nucleotide-binding protein Nmul_A1044 (161 aa).

This sequence belongs to the YajQ family.

Nucleotide-binding protein. The polypeptide is Nucleotide-binding protein Nmul_A1044 (Nitrosospira multiformis (strain ATCC 25196 / NCIMB 11849 / C 71)).